The chain runs to 257 residues: BTB/POZ domain-containing protein KCTD1 (257 aa).

The tract at residues 1-25 (MSRPLITRSPASPLNNQGIPTPAQL) is disordered. A phosphoserine mark is found at Ser9 and Ser12. The span at 9-25 (SPASPLNNQGIPTPAQL) shows a compositional bias: polar residues. In terms of domain architecture, BTB spans 30-100 (APVHIDVGGH…LRTSKLLIPD (71 aa)).

As to quaternary structure, forms homopentamers. Interacts with KCTD15, probably forming heteropentamers depending on its abundance in a cell-type dependent manner. Interacts with TFAP2A, TFAP2B and TFAP2C via the BTB domain. Post-translationally, sumoylated.

The protein resides in the nucleus. Its function is as follows. May repress the transcriptional activity of AP-2 family members, including TFAP2A, TFAP2B and TFAP2C to various extent. This is BTB/POZ domain-containing protein KCTD1 (Kctd1) from Rattus norvegicus (Rat).